Consider the following 97-residue polypeptide: Protein Vpr (97 aa).

The tract at residues 1–42 is homooligomerization; the sequence is MEQAPENQGPAKEPFNEWALELLEELKAEAVRHFPRPWLHAL. S79, S95, and S97 each carry phosphoserine; by host.

It belongs to the HIV-1 VPR protein family. Homooligomer, may form homodimer. Interacts with p6-gag region of the Pr55 Gag precursor protein through a (Leu-X-X)4 motif near the C-terminus of the P6gag protein. Interacts with host UNG. May interact with host RAD23A/HHR23A. Interacts with host VPRBP/DCAF1, leading to hijack the CUL4A-RBX1-DDB1-DCAF1/VPRBP complex, mediating ubiquitination of host proteins such as TERT and ZGPAT and arrest of the cell cycle in G2 phase. In terms of processing, phosphorylated on several residues by host. These phosphorylations regulate VPR activity for the nuclear import of the HIV-1 pre-integration complex.

Its subcellular location is the virion. The protein resides in the host nucleus. It localises to the host extracellular space. During virus replication, may deplete host UNG protein, and incude G2-M cell cycle arrest. Acts by targeting specific host proteins for degradation by the 26S proteasome, through association with the cellular CUL4A-DDB1 E3 ligase complex by direct interaction with host VPRPB/DCAF-1. Cell cycle arrest reportedly occurs within hours of infection and is not blocked by antiviral agents, suggesting that it is initiated by the VPR carried into the virion. Additionally, VPR induces apoptosis in a cell cycle dependent manner suggesting that these two effects are mechanistically linked. Detected in the serum and cerebrospinal fluid of AIDS patient, VPR may also induce cell death to bystander cells. Functionally, during virus entry, plays a role in the transport of the viral pre-integration (PIC) complex to the host nucleus. This function is crucial for viral infection of non-dividing macrophages. May act directly at the nuclear pore complex, by binding nucleoporins phenylalanine-glycine (FG)-repeat regions. The chain is Protein Vpr from Human immunodeficiency virus type 1 group O (isolate ANT70) (HIV-1).